Consider the following 249-residue polypeptide: Orotidine 5'-phosphate decarboxylase (249 aa).

Substrate-binding positions include aspartate 18, lysine 40, 67–76, threonine 127, arginine 188, glutamine 197, glycine 217, and arginine 218; that span reads DLKYHDIPNT. The active-site Proton donor is the lysine 69.

The protein belongs to the OMP decarboxylase family. Type 1 subfamily. Homodimer.

It catalyses the reaction orotidine 5'-phosphate + H(+) = UMP + CO2. It participates in pyrimidine metabolism; UMP biosynthesis via de novo pathway; UMP from orotate: step 2/2. Catalyzes the decarboxylation of orotidine 5'-monophosphate (OMP) to uridine 5'-monophosphate (UMP). This Baumannia cicadellinicola subsp. Homalodisca coagulata protein is Orotidine 5'-phosphate decarboxylase.